Here is a 217-residue protein sequence, read N- to C-terminus: Octanoyltransferase (217 aa).

One can recognise a BPL/LPL catalytic domain in the interval 30–209 (GNRPPTLLLL…AFAEVFGLRP (180 aa)). Substrate is bound by residues 75 to 82 (RGGDVTYH), 139 to 141 (AIG), and 152 to 154 (GFA). Residue Cys170 is the Acyl-thioester intermediate of the active site.

This sequence belongs to the LipB family.

The protein localises to the cytoplasm. The enzyme catalyses octanoyl-[ACP] + L-lysyl-[protein] = N(6)-octanoyl-L-lysyl-[protein] + holo-[ACP] + H(+). The protein operates within protein modification; protein lipoylation via endogenous pathway; protein N(6)-(lipoyl)lysine from octanoyl-[acyl-carrier-protein]: step 1/2. Functionally, catalyzes the transfer of endogenously produced octanoic acid from octanoyl-acyl-carrier-protein onto the lipoyl domains of lipoate-dependent enzymes. Lipoyl-ACP can also act as a substrate although octanoyl-ACP is likely to be the physiological substrate. In Thermus thermophilus (strain ATCC 27634 / DSM 579 / HB8), this protein is Octanoyltransferase.